Here is a 123-residue protein sequence, read N- to C-terminus: Small ribosomal subunit protein uS13 (123 aa).

Positions His93–Lys123 are disordered. Residues Ala108 to Lys123 are compositionally biased toward basic residues.

Belongs to the universal ribosomal protein uS13 family. Part of the 30S ribosomal subunit. Forms a loose heterodimer with protein S19. Forms two bridges to the 50S subunit in the 70S ribosome.

Located at the top of the head of the 30S subunit, it contacts several helices of the 16S rRNA. In the 70S ribosome it contacts the 23S rRNA (bridge B1a) and protein L5 of the 50S subunit (bridge B1b), connecting the 2 subunits; these bridges are implicated in subunit movement. Contacts the tRNAs in the A and P-sites. This is Small ribosomal subunit protein uS13 from Leuconostoc mesenteroides subsp. mesenteroides (strain ATCC 8293 / DSM 20343 / BCRC 11652 / CCM 1803 / JCM 6124 / NCDO 523 / NBRC 100496 / NCIMB 8023 / NCTC 12954 / NRRL B-1118 / 37Y).